Consider the following 304-residue polypeptide: Acetylglutamate kinase (304 aa).

Substrate-binding positions include 70–71 (GG), R92, and N185.

This sequence belongs to the acetylglutamate kinase family. ArgB subfamily.

Its subcellular location is the cytoplasm. The catalysed reaction is N-acetyl-L-glutamate + ATP = N-acetyl-L-glutamyl 5-phosphate + ADP. It participates in amino-acid biosynthesis; L-arginine biosynthesis; N(2)-acetyl-L-ornithine from L-glutamate: step 2/4. Functionally, catalyzes the ATP-dependent phosphorylation of N-acetyl-L-glutamate. This is Acetylglutamate kinase from Paracoccus denitrificans (strain Pd 1222).